Here is a 515-residue protein sequence, read N- to C-terminus: uncharacterized protein (515 aa).

Residues 146-171 form a disordered region; it reads SSEVDRNSETEGTREENSNTSDWDEQ. Basic and acidic residues predominate over residues 148–162; that stretch reads EVDRNSETEGTREEN.

It is found in the cytoplasm. The protein resides in the nucleus. This is an uncharacterized protein from Schizosaccharomyces pombe (strain 972 / ATCC 24843) (Fission yeast).